We begin with the raw amino-acid sequence, 299 residues long: ATP phosphoribosyltransferase (299 aa).

This sequence belongs to the ATP phosphoribosyltransferase family. Long subfamily. As to quaternary structure, equilibrium between an active dimeric form, an inactive hexameric form and higher aggregates. Interconversion between the various forms is largely reversible and is influenced by the natural substrates and inhibitors of the enzyme. Requires Mg(2+) as cofactor.

The protein localises to the cytoplasm. The enzyme catalyses 1-(5-phospho-beta-D-ribosyl)-ATP + diphosphate = 5-phospho-alpha-D-ribose 1-diphosphate + ATP. It participates in amino-acid biosynthesis; L-histidine biosynthesis; L-histidine from 5-phospho-alpha-D-ribose 1-diphosphate: step 1/9. With respect to regulation, feedback inhibited by histidine. Catalyzes the condensation of ATP and 5-phosphoribose 1-diphosphate to form N'-(5'-phosphoribosyl)-ATP (PR-ATP). Has a crucial role in the pathway because the rate of histidine biosynthesis seems to be controlled primarily by regulation of HisG enzymatic activity. The polypeptide is ATP phosphoribosyltransferase (Yersinia pseudotuberculosis serotype O:1b (strain IP 31758)).